The chain runs to 464 residues: Centrosomal protein of 55 kDa (464 aa).

The span at 1–11 (MSSRSTKDLIK) shows a compositional bias: basic and acidic residues. The disordered stretch occupies residues 1–26 (MSSRSTKDLIKSKWGSKPSNSKSETT). 3 coiled-coil regions span residues 22–186 (KSET…QWLV), 238–337 (NDLL…FLYT), and 374–403 (QHQLHVILKELRKARNQITQLESLKQLHEF). Ser-96 is modified (phosphoserine). The interaction with TSG101 stretch occupies residues 157–236 (PNCFNSSINN…GYLQEEKQKC (80 aa)). The interval 160–214 (FNSSINNIHEMEIQLKDALEKNQQWLVYDQQREVYVKGLLAKIFELEKKTETAAH) is interaction with PDCD6IP. A required for localization to the interphase centrosome and to the midbody during cytokinesis region spans residues 355 to 464 (QMQACTLDFE…LLVHVEYCSK (110 aa)). 2 positions are modified to phosphoserine; by CDK1 and MAPK1: Ser-425 and Ser-428. Thr-430 carries the post-translational modification Phosphothreonine. A Phosphoserine; by PLK1 modification is found at Ser-436.

As to quaternary structure, homodimer. Interacts (phosphorylated on Ser-425 and Ser-428) with PLK1; the interaction is indirect via the MTMR3:MTMR4 heterooligomer, occurs during early mitosis, regulates the phosphorylation of CEP55 by PLK1 and its recruitment to the midbody where it can mediate cell abscission. Interacts with AKAP9/CG-NAP; the interaction occurs in interphase and is lost upon mitotic entry. Interacts with PCNT/Kendrin; the interaction occurs in interphase and is lost upon mitotic entry. Directly interacts with PDCD6IP; this interaction is required for PDCD6IP targeting to the midbody; CEP55 binds PDCD6IP in a 2:1 stoichiometry; PDCD6IP competes with TSG101 for the same binding site. Interacts with TSG101; TSG101 competes with PDCD6IP for the same binding site; interaction is required for cytokinesis but not for viral budding. Interacts with MVB12A, VPS37B, VPS37C and VPS28. In terms of processing, there is a hierachy of phosphorylation, where both Ser-425 and Ser-428 are phosphorylated at the onset of mitosis, prior to Ser-436. Phosphorylation at Ser-425 and Ser-428 is required for dissociation from the centrosome at the G2/M boundary. Phosphorylation at the 3 sites, Ser-425, Ser-428 and Ser-436, is required for protein function at the final stages of cell division to complete cytokinesis successfully. In terms of tissue distribution, expressed in embryonic brain. Expressed in fetal brain ganglionic eminence, kidney tubules and multinucleate neurons in the temporal cortex. Expressed in adult brain, cerebellum, kidney tubules, intestine and muscles (at protein level). Widely expressed, mostly in proliferative tissues. Highly expressed in testis. Intermediate levels in adult and fetal thymus, as well as in various cancer cell lines. Low levels in different parts of the digestive tract, bone marrow, lymph nodes, placenta, fetal heart and fetal spleen. Hardly detected in brain.

The protein localises to the cytoplasm. It localises to the cytoskeleton. It is found in the microtubule organizing center. Its subcellular location is the centrosome. The protein resides in the centriole. The protein localises to the cleavage furrow. It localises to the midbody. It is found in the midbody ring. Functionally, plays a role in mitotic exit and cytokinesis. Recruits PDCD6IP and TSG101 to midbody during cytokinesis. Required for successful completion of cytokinesis. Not required for microtubule nucleation. Plays a role in the development of the brain and kidney. This is Centrosomal protein of 55 kDa from Homo sapiens (Human).